Consider the following 597-residue polypeptide: Probable bifunctional ADP-ribose hydrolase/ADP-ribosyltransferase (597 aa).

The Macro domain maps to 99-299 (SRLIKHGDLG…FYSKLLGPSH (201 aa)). Residues Asp-118, Ile-119, and Asn-133 each coordinate ADP-D-ribose. Positions 139, 144, and 146 each coordinate Zn(2+). ADP-D-ribose-binding residues include Cys-146, Ile-147, Asp-148, Ser-244, Thr-245, Gly-246, and Phe-248. Positions 307 to 597 (ENTPQGSLSL…IGRAIPLLLE (291 aa)) constitute a Deacetylase sirtuin-type domain. Residues Ala-333, 418-421 (SNAD), and Gln-438 each bind NAD(+). The Zn(2+) site is built by Cys-446, Cys-450, Cys-485, and Cys-488. An NAD(+)-binding site is contributed by Val-584.

This sequence in the N-terminal section; belongs to the MacroD-type family. Zn-Macro subfamily. In the C-terminal section; belongs to the sirtuin family. Class M subfamily. In terms of assembly, monomer. Zn(2+) serves as cofactor.

It carries out the reaction 5-O-(ADP-D-ribosyl)-L-glutamyl-[protein] + H2O = L-glutamyl-[protein] + ADP-D-ribose + H(+). Is probably a bifunctional enzyme with ADP-ribosyltransferase and ADP-ribosylhydrolase activities. In vitro, can act as an ADP-ribosylhydrolase that hydrolyzes ADP-ribosyl-glutamate bonds. It can remove the ADP-ribosyl modification from the human mono-ADP-ribosylated PARP1 E988Q mutant, which is primarily modified on glutamate site with only minor aspartate contribution. It cannot hydrolyze the ADP-ribosyl-arpartate bond in ribosylated S.pyogenes GcvH-L. This chain is Probable bifunctional ADP-ribose hydrolase/ADP-ribosyltransferase, found in Fusarium oxysporum f. sp. cubense.